Consider the following 374-residue polypeptide: UPF0754 membrane protein NWMN_1738 (374 aa).

The next 2 membrane-spanning stretches (helical) occupy residues 4 to 24 (LFII…TNVI) and 354 to 374 (SLGF…AIFV).

This sequence belongs to the UPF0754 family.

It localises to the cell membrane. This chain is UPF0754 membrane protein NWMN_1738, found in Staphylococcus aureus (strain Newman).